The following is a 758-amino-acid chain: Relaxin receptor 1 (758 aa).

The Extracellular portion of the chain corresponds to 1 to 408 (MTSGPFFFCV…LENLLASIIQ (408 aa)). Residues 26–63 (SCPLGSFPCGNISKCLPQLLHCNGVDDCGNQADEDNCG) form the LDL-receptor class A domain. Disulfide bonds link Cys-27–Cys-40, Cys-34–Cys-53, and Cys-47–Cys-62. N-linked (GlcNAc...) asparagine glycosylation is present at Asn-36. Residues Leu-45, Asn-48, Val-50, Asp-52, Asp-58, and Glu-59 each contribute to the Ca(2+) site. 11 LRR repeats span residues 105–125 (LCRD…PSVS), 126–148 (SNVT…SFRK), 149–172 (YHDL…AFRG), 173–196 (LHSL…VFED), 198–220 (HRLE…TFYG), 221–244 (LNSL…PLCQ), 246–269 (MPRL…TFIS), 270–293 (CNNL…AFTH), 294–317 (LQKL…IFKD), 319–341 (KELS…QFDY), and 342–365 (LAKL…MFRP). Asn-127 carries N-linked (GlcNAc...) asparagine glycosylation. N-linked (GlcNAc...) asparagine glycans are attached at residues Asn-264 and Asn-272. Residue Asn-325 is glycosylated (N-linked (GlcNAc...) asparagine). N-linked (GlcNAc...) asparagine glycosylation occurs at Asn-368. The chain crosses the membrane as a helical span at residues 409-429 (RVFVWVVSAITCFGNIFVICM). Residues 430 to 443 (RPYIRSENKLHAMS) lie on the Cytoplasmic side of the membrane. Residues 444-464 (IMSLCCADCLMGVYLFVIGAF) form a helical membrane-spanning segment. At 465-486 (DLKFRGEYRKHAQPWMESVHCQ) the chain is on the extracellular side. Cys-485 and Cys-563 form a disulfide bridge. A helical transmembrane segment spans residues 487–507 (FMGSLAVLSTEVSVLLLTFLT). The Cytoplasmic portion of the chain corresponds to 508-527 (LEKYICIVYPFRCLRPRKCR). Residues 528–548 (TVAVLIFIWITGFIVAFAPLG) form a helical membrane-spanning segment. Residues 549–577 (NKEFFKNYYGTNGVCFPLHSEDTGSTGAQ) lie on the Extracellular side of the membrane. The chain crosses the membrane as a helical span at residues 578–598 (IYSVVIFLGINLVAFIIIVFS). The Cytoplasmic portion of the chain corresponds to 599–629 (YGSMFYSVHQSTITATEIQKQVKKEMILAKR). The helical transmembrane segment at 630-650 (FFFIVFTDALCWIPIFILKFL) threads the bilayer. Residues 651–660 (SLIRVEIPDT) are Extracellular-facing. The chain crosses the membrane as a helical span at residues 661–681 (ITSWVVIFILPINSALNPIIY). Residues 682–758 (TLTTRPFKEM…SRSSRLNSYS (77 aa)) lie on the Cytoplasmic side of the membrane.

This sequence belongs to the G-protein coupled receptor 1 family. In terms of assembly, interacts with C1QTNF8. In terms of tissue distribution, detected in brain cortex, and at low levels in testis.

Its subcellular location is the cell membrane. Its function is as follows. Receptor for relaxins. The activity of this receptor is mediated by G proteins leading to stimulation of adenylate cyclase and an increase of cAMP. Binding of the ligand may also activate a tyrosine kinase pathway that inhibits the activity of a phosphodiesterase that degrades cAMP. The polypeptide is Relaxin receptor 1 (Rxfp1) (Rattus norvegicus (Rat)).